The following is a 325-amino-acid chain: NADH-quinone oxidoreductase subunit H (325 aa).

Helical transmembrane passes span 11 to 31 (ILIS…CGAF), 81 to 101 (VIFT…FAIV), 114 to 134 (IGIL…LFAG), 149 to 169 (ASAQ…GVVA), 186 to 206 (MWNV…GVAV), 237 to 257 (FFVG…TLFF), 265 to 285 (LPPF…FILI), and 304 to 324 (VCLP…LYNA).

It belongs to the complex I subunit 1 family. NDH-1 is composed of 13 different subunits. Subunits NuoA, H, J, K, L, M, N constitute the membrane sector of the complex.

It is found in the cell inner membrane. The enzyme catalyses a quinone + NADH + 5 H(+)(in) = a quinol + NAD(+) + 4 H(+)(out). NDH-1 shuttles electrons from NADH, via FMN and iron-sulfur (Fe-S) centers, to quinones in the respiratory chain. The immediate electron acceptor for the enzyme in this species is believed to be ubiquinone. Couples the redox reaction to proton translocation (for every two electrons transferred, four hydrogen ions are translocated across the cytoplasmic membrane), and thus conserves the redox energy in a proton gradient. This subunit may bind ubiquinone. This is NADH-quinone oxidoreductase subunit H from Serratia proteamaculans (strain 568).